A 383-amino-acid polypeptide reads, in one-letter code: Large ribosomal subunit protein uL3 (383 aa).

This sequence belongs to the universal ribosomal protein uL3 family.

The protein resides in the cytoplasm. This chain is Large ribosomal subunit protein uL3 (RPL3-1), found in Encephalitozoon cuniculi (strain GB-M1) (Microsporidian parasite).